The primary structure comprises 205 residues: N-(5'-phosphoribosyl)anthranilate isomerase (205 aa).

It belongs to the TrpF family.

The catalysed reaction is N-(5-phospho-beta-D-ribosyl)anthranilate = 1-(2-carboxyphenylamino)-1-deoxy-D-ribulose 5-phosphate. Its pathway is amino-acid biosynthesis; L-tryptophan biosynthesis; L-tryptophan from chorismate: step 3/5. The chain is N-(5'-phosphoribosyl)anthranilate isomerase from Thermotoga petrophila (strain ATCC BAA-488 / DSM 13995 / JCM 10881 / RKU-1).